A 439-amino-acid polypeptide reads, in one-letter code: MKFYIRTFGCQMNINESEIMAGLLKEEGFEWTENPKEADIILINSCAVREKAENKMYGAIGGYGKLKDENKNLILGVGGCSAEKERENLLERFKNIDFVFGTRNVVDIGNLVKRALNGKRFADFSDKLNDVNYDIPKMPISKHHAWITIIYGCNKYCSYCIVPYTRGFEKSRPMEDIIREVESYAKKGYKEITFLGQNVDSYGKDFGDKKSKLDLLIQKAAEFDSIKRIWFLTSYPSDITDSLIQTVANEEKAANYFHLPAQSGSNKILKAMNRKYTREEFIELVNKVKKEVANVTVSSDFITGFPSETDEDFEETVDLIKQCRFERINIAEYSPREGTIAYKYQNDDVPKHIKNKRLQYLMELQKRINLEENEKYLEQEVVIIQEGKAGKNGTYMGRTMNNKLIIFESNEELNGEFLKVKVNKITPGPLYGEVVNNLY.

An MTTase N-terminal domain is found at 1–117; it reads MKFYIRTFGC…IGNLVKRALN (117 aa). 6 residues coordinate [4Fe-4S] cluster: C10, C46, C80, C153, C157, and C160. Positions 139–371 constitute a Radical SAM core domain; the sequence is PISKHHAWIT…MELQKRINLE (233 aa). Residues 369–436 enclose the TRAM domain; it reads NLEENEKYLE…PGPLYGEVVN (68 aa).

Belongs to the methylthiotransferase family. MiaB subfamily. As to quaternary structure, monomer. [4Fe-4S] cluster serves as cofactor.

It localises to the cytoplasm. The enzyme catalyses N(6)-dimethylallyladenosine(37) in tRNA + (sulfur carrier)-SH + AH2 + 2 S-adenosyl-L-methionine = 2-methylsulfanyl-N(6)-dimethylallyladenosine(37) in tRNA + (sulfur carrier)-H + 5'-deoxyadenosine + L-methionine + A + S-adenosyl-L-homocysteine + 2 H(+). Functionally, catalyzes the methylthiolation of N6-(dimethylallyl)adenosine (i(6)A), leading to the formation of 2-methylthio-N6-(dimethylallyl)adenosine (ms(2)i(6)A) at position 37 in tRNAs that read codons beginning with uridine. The protein is tRNA-2-methylthio-N(6)-dimethylallyladenosine synthase of Petrotoga mobilis (strain DSM 10674 / SJ95).